The sequence spans 348 residues: Alcohol dehydrogenase 2 (348 aa).

7 residues coordinate Zn(2+): cysteine 44, histidine 67, cysteine 98, cysteine 101, cysteine 104, cysteine 112, and cysteine 154. Residues 178–184 (GAAGGLG), aspartate 202, lysine 207, 269–271 (VGL), and arginine 341 contribute to the NAD(+) site.

It belongs to the zinc-containing alcohol dehydrogenase family. Homotetramer. Zn(2+) is required as a cofactor.

The protein localises to the cytoplasm. It carries out the reaction a primary alcohol + NAD(+) = an aldehyde + NADH + H(+). It catalyses the reaction a secondary alcohol + NAD(+) = a ketone + NADH + H(+). This Candida albicans (strain SC5314 / ATCC MYA-2876) (Yeast) protein is Alcohol dehydrogenase 2 (ADH2).